The sequence spans 122 residues: Large ribosomal subunit protein uL14 (122 aa).

Belongs to the universal ribosomal protein uL14 family. As to quaternary structure, part of the 50S ribosomal subunit. Forms a cluster with proteins L3 and L19. In the 70S ribosome, L14 and L19 interact and together make contacts with the 16S rRNA in bridges B5 and B8.

Binds to 23S rRNA. Forms part of two intersubunit bridges in the 70S ribosome. This Cytophaga hutchinsonii (strain ATCC 33406 / DSM 1761 / CIP 103989 / NBRC 15051 / NCIMB 9469 / D465) protein is Large ribosomal subunit protein uL14.